The chain runs to 296 residues: Remorin 4.1 (296 aa).

3 disordered regions span residues 1 to 78 (MLTL…SGEN), 121 to 142 (TRIG…DSNP), and 242 to 266 (EKTQ…EGKR). A compositionally biased stretch (basic and acidic residues) spans 21–39 (ASDRRDETPSSEIVVRDIH). Polar residues-rich tracts occupy residues 41–53 (MTTT…PQQR) and 62–78 (PSRS…SGEN). Composition is skewed to basic and acidic residues over residues 121-135 (TRIG…HGQV) and 253-266 (RKAE…EGKR). Residues 226-261 (MKKIERKLEDRRAKAMEKTQNKVAKAQRKAEERRAT) are a coiled coil.

The protein belongs to the remorin family. In terms of assembly, forms homodimer and heterodimer with REM4.2. Interacts with KIN11. Post-translationally, phosphorylated by KIN11. Probably ubiquitinated and degraded by the 26S proteasome pathway. As to expression, predominantly detected in bud, stem, root, flower, silique, and leaves, and enhanced dramatically in senescence leaf.

The protein localises to the cell membrane. Functionally, collaborates with REM4.2 to positively regulate the BCTV and BSCTV susceptibility. The chain is Remorin 4.1 from Arabidopsis thaliana (Mouse-ear cress).